Consider the following 102-residue polypeptide: Large ribosomal subunit protein bL21 (102 aa).

This sequence belongs to the bacterial ribosomal protein bL21 family. In terms of assembly, part of the 50S ribosomal subunit. Contacts protein L20.

Its function is as follows. This protein binds to 23S rRNA in the presence of protein L20. The sequence is that of Large ribosomal subunit protein bL21 from Bacillus licheniformis (strain ATCC 14580 / DSM 13 / JCM 2505 / CCUG 7422 / NBRC 12200 / NCIMB 9375 / NCTC 10341 / NRRL NRS-1264 / Gibson 46).